Reading from the N-terminus, the 471-residue chain is Adenosylhomocysteinase (471 aa).

Substrate contacts are provided by threonine 58, aspartate 133, and glutamate 195. 196-198 serves as a coordination point for NAD(+); the sequence is TTT. Substrate is bound by residues lysine 225 and aspartate 229. NAD(+) contacts are provided by residues asparagine 230, 259–264, glutamate 282, asparagine 317, 338–340, and asparagine 383; these read GFGDVG and IGH.

It belongs to the adenosylhomocysteinase family. It depends on NAD(+) as a cofactor.

Its subcellular location is the cytoplasm. It carries out the reaction S-adenosyl-L-homocysteine + H2O = L-homocysteine + adenosine. It functions in the pathway amino-acid biosynthesis; L-homocysteine biosynthesis; L-homocysteine from S-adenosyl-L-homocysteine: step 1/1. May play a key role in the regulation of the intracellular concentration of adenosylhomocysteine. The chain is Adenosylhomocysteinase from Rhodopseudomonas palustris (strain BisB5).